The primary structure comprises 246 residues: mRNA-decapping protein g5R (246 aa).

The Nudix hydrolase domain maps to 93 to 239 (QKFRKNWLLP…IIGPAFNFIK (147 aa)). Residues 128 to 149 (GKPKEDESDLTCAIREFEEETG) carry the Nudix box motif. Mg(2+) is bound at residue glutamate 134. Glutamate 143 acts as the Nucleophile in catalysis. Glutamate 147 and aspartate 169 together coordinate Mg(2+).

This sequence belongs to the Nudix hydrolase family. DIPP subfamily. As to quaternary structure, interacts with host RPL23A. It depends on Mg(2+) as a cofactor. Mn(2+) serves as cofactor.

It localises to the host rough endoplasmic reticulum. The catalysed reaction is diphospho-myo-inositol polyphosphate + H2O = myo-inositol polyphosphate + phosphate.. Functionally, decapping enzyme required for the removal of the 5'-end m7GpppN cap tethered to viral and host mRNAs to allow their decay in cells. May therefore accelerate viral and cellular mRNA turnover to eliminate competing host mRNAs and allow stage-specific synthesis of viral proteins. Acceleration of the turnover of cellular transcripts may even promote the shutoff of host protein synthesis. In addition to the mRNA cap, g5R also efficiently hydrolyzes diphosphoinositol polyphosphates. Down-regulation of the level of PP-InsP5 (diphosphoinositol pentakisphosphate) may play a role in viral manipulation of the cellular secretory pathway, a step necessary for the formation of virions. Binds viral and cellular poly(A) mRNAs, thereby decreasing both types of mRNAs. In African swine fever virus (isolate Warthog/Namibia/Wart80/1980) (ASFV), this protein is mRNA-decapping protein g5R.